Consider the following 314-residue polypeptide: Transcription factor TCP20 (314 aa).

Disordered stretches follow at residues 1-91 and 295-314; these read MDPK…RGRR and NHEE…GSGR. Basic and acidic residues-rich tracts occupy residues 38–49 and 77–89; these read DENRKPTTEIKD and SNKD…EGRG. Positions 78–132 constitute a TCP domain; that stretch reads NKDRHTKVEGRGRRIRMPALCAARIFQLTRELGHKSDGETIQWLLQQAEPSIIAA.

In terms of assembly, interacts with PURA1. Interacts with SPL.

Its subcellular location is the nucleus. Transcription factor that binds to the site II motif (3'-TGGGCC/T-5') in the promoter of PCNA-2 and to 3'-GCCCG/A-5' elements in the promoters of cyclin CYCB1-1 and ribosomal protein genes. This chain is Transcription factor TCP20 (TCP20), found in Arabidopsis thaliana (Mouse-ear cress).